The primary structure comprises 790 residues: Cadherin-6 (790 aa).

An N-terminal signal peptide occupies residues 1–30; the sequence is MRTYHCFWLLFWAGQPHQSFLTLLSKRTSG. The propeptide occupies 31–53; the sequence is FPEKEKVLVLSGNSRRDLSRSKR. 5 consecutive Cadherin domains span residues 54–159, 160–268, 269–383, 384–486, and 487–608; these read SWMW…EPMF, TKDV…PPRF, PQST…PPVF, SRPA…DNAP, and EFAM…LIHP. The Extracellular portion of the chain corresponds to 54-615; sequence SWMWNQFFLL…IHPTGLSTGA (562 aa). 2 N-linked (GlcNAc...) asparagine glycosylation sites follow: Asn-165 and Asn-255. Residues 261-289 are disordered; sequence VNDNPPRFPQSTYQFRAPESTPPDSPIGR. Asn-437, Asn-455, and Asn-536 each carry an N-linked (GlcNAc...) asparagine glycan. The helical transmembrane segment at 616 to 636 threads the bilayer; it reads LIAILLCIIILLVTVVLFAAL. Topologically, residues 637–790 are cytoplasmic; the sequence is RRQRKKEPLI…YGSMDSDKDS (154 aa).

Its subcellular location is the cell membrane. Cadherins are calcium-dependent cell adhesion proteins. They preferentially interact with themselves in a homophilic manner in connecting cells; cadherins may thus contribute to the sorting of heterogeneous cell types. The protein is Cadherin-6 (CDH6) of Gallus gallus (Chicken).